A 258-amino-acid polypeptide reads, in one-letter code: F-box/SPRY domain-containing protein 1 (258 aa).

An F-box domain is found at 6-54 (MEYAPNIPDNVLELIFSFLKLQDLRNCTLVCKSWYRFFCDENNEVWRAQ). Residues 64 to 256 (FKNDLLTVVP…ISMVYLGAPL (193 aa)) enclose the B30.2/SPRY domain.

It belongs to the FBXO45/Fsn family. In terms of assembly, component of an E3 ubiquitin ligase complex composed of hiw and Fsn.

It is found in the synapse. The protein operates within protein modification; protein ubiquitination. In terms of biological role, required in the presynaptic motoneuron to down-regulate the levels of wnd and restrain synaptic terminal growth at the neuromuscular junction (NMJ). The protein is F-box/SPRY domain-containing protein 1 of Anopheles gambiae (African malaria mosquito).